A 451-amino-acid polypeptide reads, in one-letter code: Tubulin gamma-1 chain (451 aa).

At Ser-131 the chain carries Phosphoserine; by BRSK1. Residue 142 to 148 (AGGTGSG) coordinates GTP.

Belongs to the tubulin family. Component of the gamma-tubulin ring complex (gTuRC) consisting of TUBGCP2, TUBGCP3, TUBGCP4, TUBGCP5 and TUBGCP6 and gamma-tubulin TUBG1 or TUBG2. TUBGCP2, TUBGCP3, TUBGCP4, TUBGCP5 and TUBGCP6 assemble in a 5:5:2:1:1 stoichiometry; each is associated with a gamma-tubulin, thereby arranging 14 gamma-tubulins in a helical manner. Gamma-tubulin at the first position is blocked by TUBGCP3 at the last position, allowing 13 protafilaments to grow into a microtubule. The gTuRC (via TUBGCP3 and TUBGCP6) interacts with ACTB and MZT1; the interactions form a luminal bridge that stabilizes the initial structure during complex assembly. The gTuRC (via TUBGCP2) interacts with MZT2A/MZT2B and CDK5RAP2 (via CM1 motif); the interactions play a role in gTuRC activation. Interacts with alpha-beta tubulin heterodimers; the interaction allows microtubules to nucleate from the gTuRC. Interacts with B9D2. Interacts with CDK5RAP2; the interaction is leading to centrosomal localization of TUBG1 and CDK5RAP2. Interacts with CIMAP3. Interacts with SAS6 and NUP62 at the centrosome. Interacts with EML3 (phosphorylated at 'Thr-881') and HAUS8. Interacts with DNM2; this interaction may participate in centrosome cohesion. Interacts with CCDC66. Post-translationally, phosphorylation at Ser-131 by BRSK1 regulates centrosome duplication, possibly by mediating relocation of gamma-tubulin and its associated proteins from the cytoplasm to the centrosome.

The protein resides in the cytoplasm. It localises to the cytoskeleton. The protein localises to the microtubule organizing center. It is found in the centrosome. Its subcellular location is the spindle. In terms of biological role, tubulin is the major constituent of microtubules, protein filaments consisting of alpha- and beta-tubulin heterodimers. Gamma-tubulin is a key component of the gamma-tubulin ring complex (gTuRC) which mediates microtubule nucleation. The gTuRC regulates the minus-end nucleation of alpha-beta tubulin heterodimers that grow into microtubule protafilaments, a critical step in centrosome duplication and spindle formation. The polypeptide is Tubulin gamma-1 chain (Bos taurus (Bovine)).